A 767-amino-acid chain; its full sequence is MGRRSRGRRLQQQQRPEDAEDGAEGGGKRGEAGWEGGYPEIVKENKLFEHYYQELKIVPEGEWGQFMDALREPLPATLRITGYKSHAKEILHCLKNKYFKELEDLEVDGQKVEVPQPLSWYPEELAWHTNLSRKILRKSPHLEKFHQFLVSETESGNISRQEAVSMIPPLLLNVRPHHKILDMCAAPGSKTTQLIEMLHADMNVPFPEGFVIANDVDNKRCYLLVHQAKRLSSPCIMVVNHDASSIPRLQIDVDGRKEILFYDRILCDVPCSGDGTMRKNIDVWKKWTTLNSLQLHGLQLRIATRGAEQLAEGGRMVYSTCSLNPIEDEAVIASLLEKSEGALELADVSNELPGLKWMPGITQWKVMTKDGQWFTDWDAVPHSRHTQIRPTMFPPKDPEKLQAMHLERCLRILPHHQNTGGFFVAVLVKKSSMPWNKRQPKLQGKSAETRESTQLSPADLTEGKPTDPSKLESPSFTGTGDTEIAHATEDLENNGSKKDGVCGPPPSKKMKLFGFKEDPFVFIPEDDPLFPPIEKFYALDPSFPRMNLLTRTTEGKKRQLYMVSKELRNVLLNNSEKMKVINTGIKVWCRNNSGEEFDCAFRLAQEGIYTLYPFINSRIITVSMEDVKILLTQENPFFRKLSSETYSQAKDLAKGSIVLKYEPDSANPDALQCPIVLCGWRGKASIRTFVPKNERLHYLRMMGLEVLGEKKKEGVILTNESAASTGQPDNDVTEGQRAGEPNSPDAEEANSPDVTAGCDPAGVHPPR.

A disordered region spans residues 1–36; the sequence is MGRRSRGRRLQQQQRPEDAEDGAEGGGKRGEAGWEG. Residue lysine 46 forms a Glycyl lysine isopeptide (Lys-Gly) (interchain with G-Cter in SUMO2) linkage. Residue serine 139 is modified to Phosphoserine; by AURKB. S-adenosyl-L-methionine contacts are provided by residues 184 to 190, aspartate 215, aspartate 242, and aspartate 268; that span reads CAAPGSK. The active-site Nucleophile is cysteine 321. A disordered region spans residues 436-481; that stretch reads NKRQPKLQGKSAETRESTQLSPADLTEGKPTDPSKLESPSFTGTGD. Residue serine 456 is modified to Phosphoserine. The span at 461-470 shows a compositional bias: basic and acidic residues; that stretch reads TEGKPTDPSK. Glycyl lysine isopeptide (Lys-Gly) (interchain with G-Cter in SUMO2) cross-links involve residues lysine 464 and lysine 470. Serine 473 is modified (phosphoserine). Glycyl lysine isopeptide (Lys-Gly) (interchain with G-Cter in SUMO2) cross-links involve residues lysine 511 and lysine 516. Lysine 586 is modified (N6-acetyllysine; alternate). At lysine 586 the chain carries N6-malonyllysine; alternate. A Glycyl lysine isopeptide (Lys-Gly) (interchain with G-Cter in SUMO2); alternate cross-link involves residue lysine 586. Serine 593 is subject to Phosphoserine. Residues lysine 640, lysine 654, and lysine 660 each participate in a glycyl lysine isopeptide (Lys-Gly) (interchain with G-Cter in SUMO2) cross-link. Threonine 718 is modified (phosphothreonine). Over residues 719–730 the composition is skewed to polar residues; it reads NESAASTGQPDN. Residues 719–767 form a disordered region; it reads NESAASTGQPDNDVTEGQRAGEPNSPDAEEANSPDVTAGCDPAGVHPPR. A phosphoserine mark is found at serine 724, serine 743, and serine 751.

This sequence belongs to the class I-like SAM-binding methyltransferase superfamily. RsmB/NOP family. TRM4 subfamily. As to quaternary structure, interacts with NPM1 and NCL during interphase; interaction is disrupted following phosphorylation at Ser-139. In terms of processing, phosphorylated at Ser-139 by AURKB during mitosis, leading to abolish methyltransferase activity and the interaction with NPM1. In terms of tissue distribution, expressed in adult and fetal brain and in lymphoblastoid cells.

It is found in the nucleus. Its subcellular location is the nucleolus. The protein localises to the cytoplasm. It localises to the mitochondrion. The protein resides in the cytoskeleton. It is found in the spindle. Its subcellular location is the secreted. The protein localises to the extracellular exosome. It catalyses the reaction cytidine(48) in tRNA + S-adenosyl-L-methionine = 5-methylcytidine(48) in tRNA + S-adenosyl-L-homocysteine + H(+). It carries out the reaction cytidine(49) in tRNA + S-adenosyl-L-methionine = 5-methylcytidine(49) in tRNA + S-adenosyl-L-homocysteine + H(+). The catalysed reaction is cytidine(50) in tRNA + S-adenosyl-L-methionine = 5-methylcytidine(50) in tRNA + S-adenosyl-L-homocysteine + H(+). The enzyme catalyses cytidine(34) in tRNA precursor + S-adenosyl-L-methionine = 5-methylcytidine(34) in tRNA precursor + S-adenosyl-L-homocysteine + H(+). It catalyses the reaction a cytidine in mRNA + S-adenosyl-L-methionine = a 5-methylcytidine in mRNA + S-adenosyl-L-homocysteine + H(+). Its activity is regulated as follows. Inhibited by magnesium ions. In terms of biological role, RNA cytosine C(5)-methyltransferase that methylates cytosine to 5-methylcytosine (m5C) in various RNAs, such as tRNAs, mRNAs and some long non-coding RNAs (lncRNAs). Involved in various processes, such as epidermal stem cell differentiation, testis differentiation and maternal to zygotic transition during early development: acts by increasing protein synthesis; cytosine C(5)-methylation promoting tRNA stability and preventing mRNA decay. Methylates cytosine to 5-methylcytosine (m5C) at positions 34 and 48 of intron-containing tRNA(Leu)(CAA) precursors, and at positions 48, 49 and 50 of tRNA(Gly)(GCC) precursors. tRNA methylation is required generation of RNA fragments derived from tRNAs (tRFs). Also mediates C(5)-methylation of mitochondrial tRNAs. Catalyzes cytosine C(5)-methylation of mRNAs, leading to stabilize them and prevent mRNA decay: mRNA stabilization involves YBX1 that specifically recognizes and binds m5C-modified transcripts. Cytosine C(5)-methylation of mRNAs also regulates mRNA export: methylated transcripts are specifically recognized by THOC4/ALYREF, which mediates mRNA nucleo-cytoplasmic shuttling. Also mediates cytosine C(5)-methylation of non-coding RNAs, such as vault RNAs (vtRNAs), promoting their processing into regulatory small RNAs. Cytosine C(5)-methylation of vtRNA VTRNA1.1 promotes its processing into small-vault RNA4 (svRNA4) and regulates epidermal differentiation. May act downstream of Myc to regulate epidermal cell growth and proliferation. Required for proper spindle assembly and chromosome segregation, independently of its methyltransferase activity. The sequence is that of RNA cytosine C(5)-methyltransferase NSUN2 from Homo sapiens (Human).